The following is a 382-amino-acid chain: Ribosomal RNA large subunit methyltransferase G (382 aa).

Belongs to the methyltransferase superfamily. RlmG family.

Its subcellular location is the cytoplasm. The enzyme catalyses guanosine(1835) in 23S rRNA + S-adenosyl-L-methionine = N(2)-methylguanosine(1835) in 23S rRNA + S-adenosyl-L-homocysteine + H(+). In terms of biological role, specifically methylates the guanine in position 1835 (m2G1835) of 23S rRNA. This Aliivibrio fischeri (strain MJ11) (Vibrio fischeri) protein is Ribosomal RNA large subunit methyltransferase G.